The chain runs to 202 residues: Adenylyl-sulfate kinase (202 aa).

31-38 is an ATP binding site; the sequence is GLSASGKS. Residue Ser-105 is the Phosphoserine intermediate of the active site.

It belongs to the APS kinase family.

The catalysed reaction is adenosine 5'-phosphosulfate + ATP = 3'-phosphoadenylyl sulfate + ADP + H(+). It functions in the pathway sulfur metabolism; hydrogen sulfide biosynthesis; sulfite from sulfate: step 2/3. Its function is as follows. Catalyzes the synthesis of activated sulfate. This chain is Adenylyl-sulfate kinase (MET14), found in Saccharomyces bayanus (Yeast).